The sequence spans 356 residues: tRNA N6-adenosine threonylcarbamoyltransferase (356 aa).

Positions 115 and 119 each coordinate Fe cation. Substrate is bound by residues 138-142 (LVSGG), Asp171, Gly184, and Asn283. Fe cation is bound at residue Asp311.

It belongs to the KAE1 / TsaD family. Fe(2+) serves as cofactor.

Its subcellular location is the cytoplasm. It catalyses the reaction L-threonylcarbamoyladenylate + adenosine(37) in tRNA = N(6)-L-threonylcarbamoyladenosine(37) in tRNA + AMP + H(+). Required for the formation of a threonylcarbamoyl group on adenosine at position 37 (t(6)A37) in tRNAs that read codons beginning with adenine. Is involved in the transfer of the threonylcarbamoyl moiety of threonylcarbamoyl-AMP (TC-AMP) to the N6 group of A37, together with TsaE and TsaB. TsaD likely plays a direct catalytic role in this reaction. The protein is tRNA N6-adenosine threonylcarbamoyltransferase of Prochlorococcus marinus subsp. pastoris (strain CCMP1986 / NIES-2087 / MED4).